A 452-amino-acid polypeptide reads, in one-letter code: Nuclear distribution protein PAC1 (452 aa).

Residues 12–44 enclose the LisH domain; it reads QKDELHKAILAYFSASGLSNTGAALREELGVGD. Residues 64–91 adopt a coiled-coil conformation; sequence TGVLRLQKKIMELESRLSSLQSELDSAT. 8 WD repeats span residues 117-158, 160-200, 204-245, 248-287, 290-350, 352-391, 396-435, and 437-452; these read SHRN…RTVK, HTKA…KNIR, GHDH…CVKT, GHSD…HKAT, GHEH…LKTL, GHDN…RCVK, AHSH…INVR, and VIAT…VFAS.

It belongs to the WD repeat LIS1/nudF family. Self-associates. Interacts with NDL1 and dynein.

The protein localises to the cytoplasm. The protein resides in the cytoskeleton. It is found in the spindle pole. Functionally, positively regulates the activity of the minus-end directed microtubule motor protein dynein. May enhance dynein-mediated microtubule sliding by targeting dynein to the microtubule plus end. Required for nuclear migration during vegetative growth as well as development. Required for retrograde early endosome (EE) transport from the hyphal tip. Required for localization of dynein to the mitotic spindle poles. Recruits additional proteins to the dynein complex at SPBs. This Tuber melanosporum (strain Mel28) (Perigord black truffle) protein is Nuclear distribution protein PAC1.